The primary structure comprises 332 residues: 2,3-diketo-L-gulonate reductase (332 aa).

The active-site Proton donor is the His44. Residues 168–174 (ITMVDMS), 224–225 (WK), and 304–306 (GHE) each bind NAD(+).

The protein belongs to the LDH2/MDH2 oxidoreductase family. DlgD subfamily. As to quaternary structure, homodimer.

The protein localises to the cytoplasm. It carries out the reaction 3-dehydro-L-gulonate + NAD(+) = 2,3-dioxo-L-gulonate + NADH + H(+). The catalysed reaction is 3-dehydro-L-gulonate + NADP(+) = 2,3-dioxo-L-gulonate + NADPH + H(+). Its function is as follows. Catalyzes the reduction of 2,3-diketo-L-gulonate in the presence of NADH, to form 3-keto-L-gulonate. The chain is 2,3-diketo-L-gulonate reductase from Escherichia coli O6:K15:H31 (strain 536 / UPEC).